A 182-amino-acid chain; its full sequence is Large ribosomal subunit protein uL10 (182 aa).

This sequence belongs to the universal ribosomal protein uL10 family. In terms of assembly, part of the ribosomal stalk of the 50S ribosomal subunit. The N-terminus interacts with L11 and the large rRNA to form the base of the stalk. The C-terminus forms an elongated spine to which L12 dimers bind in a sequential fashion forming a multimeric L10(L12)X complex.

In terms of biological role, forms part of the ribosomal stalk, playing a central role in the interaction of the ribosome with GTP-bound translation factors. This is Large ribosomal subunit protein uL10 from Gluconacetobacter diazotrophicus (strain ATCC 49037 / DSM 5601 / CCUG 37298 / CIP 103539 / LMG 7603 / PAl5).